The following is a 317-amino-acid chain: N(5)-(carboxyethyl)ornithine synthase (317 aa).

Residues arginine 15, lysine 71, and histidine 92 each coordinate pyruvate. Glycine 172 to serine 177 provides a ligand contact to NADP(+).

Belongs to the AlaDH/PNT family. CEOS subfamily. In terms of assembly, homotetramer.

It carries out the reaction N(5)-[1(S)-1-carboxyethyl]-L-ornithine + NADP(+) + H2O = L-ornithine + pyruvate + NADPH + H(+). In terms of biological role, catalyzes the NADPH-dependent reductive condensation between pyruvic acid and the side chain amino group of L-ornithine to form N(5)-(L-1-carboxyethyl)-L-ornithine. To a lesser extent, can also use L-lysine as substrate (yielding N(6)-(L-1-carboxyethyl)-L-lysine), and the D-isomers of the 2 basic amino acids. Can use alpha-keto acids other than pyruvate, e.g. glyoxylate. This chain is N(5)-(carboxyethyl)ornithine synthase (ceo), found in Clostridium botulinum (strain Hall / ATCC 3502 / NCTC 13319 / Type A).